Here is a 261-residue protein sequence, read N- to C-terminus: MTDSPAPRASVQLIQTGGAAMPLVLIHDACGTIYTYHALSKLGRTVYGIGNPRFEKCTSWTGGIGEMAACYHAAIKQRIRRGKILVGGWSLGGVIALEIARLFADDAAIHVHGVVLIDSPFPSKATVTGEDLQLPPLPPGLPANRRQSVAFAMREAVDLLGDWDPKASWQRADKKPPPAALIRALDYLPGSSADAQRDEFLVDRMRTQKLLGWENSGLDFIRATYEAPGHHWGIFSSENVACLSDTLSKACAELEVVDGGR.

The protein belongs to the AMT4 thioesterase family.

Its pathway is antifungal biosynthesis. Functionally, thioesterase; part of the gene cluster that mediates the biosynthesis of the antifungal antibiotic FR901469, an inhibitor of beta-1,3-glucansynthase, exerting antifungal activity against the pathogenes Candida albicans and Aspergillus fumigatus. FR901469 is a cyclic depsipeptide containing 12 amino acid residues and a fatty acid chain. The NRPS frbI contains 12 modules responsible for the formation of the depsipeptide backbone which is denoted as Acyl-Thr-Ala-Tyr-Val-4OHPro-Thr-Thr-3OHPro-threo3OHGln-Gly-Thr-Orn-OH (C71H116N14O23). The PKS frbB is probably involved in the production of the hydrocarbon chain, and the acyl-CoA ligase frbC might be involved in the transport of the chain to the peptide ptoduct of frbI. Because FR901469 contains 3 hydroxylated amino acid residues, the 3 oxygenases frbA, frbH, and frbJ might be participating in amino acid hydroxylation. As no thioesterase domains were detected in frbI or frbB, the thioesterases frbD and frbE may instead release and cyclize the products of the NRPS and PKS, respectively. The protein is Thioesterase frbD of Dothideomycetidae sp. (strain 11243) (Fungal sp. (strain No.11243)).